We begin with the raw amino-acid sequence, 62 residues long: Large ribosomal subunit protein bL35 (62 aa).

The span at 1 to 26 (MPKMKTKSGLKKRIKITATGKVKRGN) shows a compositional bias: basic residues. The tract at residues 1-62 (MPKMKTKSGL…SDFKRYKELI (62 aa)) is disordered. The span at 53–62 (SDFKRYKELI) shows a compositional bias: basic and acidic residues.

Belongs to the bacterial ribosomal protein bL35 family.

In Metamycoplasma arthritidis (strain 158L3-1) (Mycoplasma arthritidis), this protein is Large ribosomal subunit protein bL35.